A 471-amino-acid polypeptide reads, in one-letter code: MSKKYDAGVKEYRDTYWTPDYVPLDTDLLACFKCTGQEGVPKEEVAAAVAAESSTGTWSTVWSELLTDLDFYKGRCYRIEDVPGDKESFYAFIAYPLDLFEEGSITNVLTSLVGNVFGFKALRHLRLEDIRFPMAFIKSCYGPPNGIQVERDRMNKYGRPLLGCTIKPKLGLSGKNYGRVVYECLRGGLDFTKDDENINSQPFQRWQNRFEFVAEAIKLSEQETGERKGHYLNVTANTPEEMYERAEFAKELGMPIIMHDFITGGFTANTGLSKWCRKNGMLLHIHRAMHAVIDRHPKHGIHFRVLAKCLRLSGGDQLHTGTVVGKLEGDRQTTLGYIDQLRESFVPEDRSRGNFFDQDWGSMPGVFAVASGGIHVWHMPALVAIFGDDSVLQFGGGTHGHPWGSAAGAAANRVALEACVKARNAGREIEKESRDILMEAGKHSPELAIALETWKEIKFEFDTVDKLDVQN.

Substrate-binding residues include N115 and T165. K167 serves as the catalytic Proton acceptor. K169 is a substrate binding site. Positions 193, 195, and 196 each coordinate Mg(2+). Position 193 is an N6-carboxylysine (K193). The active-site Proton acceptor is H286. Residues R287, H319, and S371 each coordinate substrate.

It belongs to the RuBisCO large chain family. Type I subfamily. Heterohexadecamer of 8 large chains and 8 small chains. Forms a CsoS2-CsoS1-RuBisCO complex. Requires Mg(2+) as cofactor.

The protein localises to the carboxysome. It catalyses the reaction 2 (2R)-3-phosphoglycerate + 2 H(+) = D-ribulose 1,5-bisphosphate + CO2 + H2O. The enzyme catalyses D-ribulose 1,5-bisphosphate + O2 = 2-phosphoglycolate + (2R)-3-phosphoglycerate + 2 H(+). In terms of biological role, ruBisCO catalyzes two reactions: the carboxylation of D-ribulose 1,5-bisphosphate, the primary event in carbon dioxide fixation, as well as the oxidative fragmentation of the pentose substrate in the photorespiration process. Both reactions occur simultaneously and in competition at the same active site. This is Ribulose bisphosphate carboxylase large chain from Parasynechococcus marenigrum (strain WH8102).